We begin with the raw amino-acid sequence, 820 residues long: DNA gyrase subunit A (820 aa).

Residues 31–496 (IPDVRDGLKP…TLTNIEIEDL (466 aa)) form the Topo IIA-type catalytic domain. Tyr119 serves as the catalytic O-(5'-phospho-DNA)-tyrosine intermediate. Residues 523–529 (QRRGGKG) carry the GyrA-box motif.

This sequence belongs to the type II topoisomerase GyrA/ParC subunit family. In terms of assembly, heterotetramer, composed of two GyrA and two GyrB chains. In the heterotetramer, GyrA contains the active site tyrosine that forms a transient covalent intermediate with DNA, while GyrB binds cofactors and catalyzes ATP hydrolysis.

The protein resides in the cytoplasm. The catalysed reaction is ATP-dependent breakage, passage and rejoining of double-stranded DNA.. In terms of biological role, a type II topoisomerase that negatively supercoils closed circular double-stranded (ds) DNA in an ATP-dependent manner to modulate DNA topology and maintain chromosomes in an underwound state. Negative supercoiling favors strand separation, and DNA replication, transcription, recombination and repair, all of which involve strand separation. Also able to catalyze the interconversion of other topological isomers of dsDNA rings, including catenanes and knotted rings. Type II topoisomerases break and join 2 DNA strands simultaneously in an ATP-dependent manner. This is DNA gyrase subunit A from Lawsonia intracellularis (strain PHE/MN1-00).